Consider the following 676-residue polypeptide: MIDQYKHQQLQIGLVSPQQIKAWANKNLPNGEVVGEVTRPSTFHYKTDKPEKDGLFCERIFGPIKSGICACGNSRASGAENEDERFCQKCGVEFVDSRIRRYQMGYIKLACPVTHVWYLKGLPSYIANLLDKPLKKLEGLVYGDFSFARPSTKKPTFLRLRGLFEEEIASCNHSISPFFSTPGFATFRNREIATGAGAIREQLADLDLRIIIENSLVEWKELEDEGYSGDEWEDRKRRIRKVFLIRRMQLAKHFIQTNVEPEWMVLCLLPVLPPELRPIVYRSGDKVVTSDINELYKRVIRRNNNLAYLLKRSELAPADLVMCQEKLVQEAVDTLLDSGSRGQPMRDGHNKVYKSLSDVIEGKEGRFRETLLGKRVDYSGRSVIVVGPSLSLHQCGLPLEIAIKLFQLFVIRDLITKRATSNVRIAKRKIWEKEPIVWEILQEVMRGHPVLLNRAPTLHRLGIQAFQPTLVEGRTISLHPLVCKGFNADFDGDQMAVHLPLSLEAQAEARLLMFSHMNLLSPAIGDPICVPTQDMLIGLYVLTIGNRRGICANRYNSCVNYPTKKVNYNMKDKEPHFSSSYDALGAYRQKLISLDSPLWLRWKLDQRVIGSREVPIEVQYESLGTYHEIYAHYLIVGNRKKEIRSIYIRTTLGHISFYRELEEAIQGFSQAYSYTI.

Zn(2+) is bound by residues Cys-69, Cys-71, Cys-87, and Cys-90. Mg(2+) is bound by residues Asp-489, Asp-491, and Asp-493.

The protein belongs to the RNA polymerase beta' chain family. RpoC1 subfamily. In plastids the minimal PEP RNA polymerase catalytic core is composed of four subunits: alpha, beta, beta', and beta''. When a (nuclear-encoded) sigma factor is associated with the core the holoenzyme is formed, which can initiate transcription. Requires Mg(2+) as cofactor. Zn(2+) serves as cofactor.

The protein localises to the plastid. The protein resides in the chloroplast. It catalyses the reaction RNA(n) + a ribonucleoside 5'-triphosphate = RNA(n+1) + diphosphate. In terms of biological role, DNA-dependent RNA polymerase catalyzes the transcription of DNA into RNA using the four ribonucleoside triphosphates as substrates. The protein is DNA-directed RNA polymerase subunit beta' of Lolium perenne (Perennial ryegrass).